A 255-amino-acid polypeptide reads, in one-letter code: Sulfate transporter CysZ (255 aa).

4 helical membrane passes run 26–46, 71–91, 150–170, and 211–231; these read LFVLLPLAINLVLFVGLIYFA, LLWPLFVVLVVLMVFFTFTML, LFILSFIPVVNLIAAPLWLLF, and IVYLVLLVPVVNLLMMPAAVA.

It belongs to the CysZ family.

It is found in the cell inner membrane. Its function is as follows. High affinity, high specificity proton-dependent sulfate transporter, which mediates sulfate uptake. Provides the sulfur source for the cysteine synthesis pathway. This is Sulfate transporter CysZ from Pseudomonas fluorescens (strain SBW25).